A 179-amino-acid polypeptide reads, in one-letter code: Large ribosomal subunit protein uL5 (179 aa).

The protein belongs to the universal ribosomal protein uL5 family. As to quaternary structure, part of the 50S ribosomal subunit; part of the 5S rRNA/L5/L18/L25 subcomplex. Contacts the 5S rRNA and the P site tRNA. Forms a bridge to the 30S subunit in the 70S ribosome.

Its function is as follows. This is one of the proteins that bind and probably mediate the attachment of the 5S RNA into the large ribosomal subunit, where it forms part of the central protuberance. In the 70S ribosome it contacts protein S13 of the 30S subunit (bridge B1b), connecting the 2 subunits; this bridge is implicated in subunit movement. Contacts the P site tRNA; the 5S rRNA and some of its associated proteins might help stabilize positioning of ribosome-bound tRNAs. This chain is Large ribosomal subunit protein uL5, found in Shewanella amazonensis (strain ATCC BAA-1098 / SB2B).